A 156-amino-acid polypeptide reads, in one-letter code: MNINLTLFGQTLAFAIFVWFCMKLVWPPITAAMAARQKKIAEGLDAAGRAQQDLKLAQDKVSHTLRETKEQAAQIIEQANKHANAIIEEAKQQARVEGERLVAGARAEIEQEVNRARDQLRSQVAALAVAGAEKILESQVDAKVHNELVEKLASQL.

Residues L12–A32 form a helical membrane-spanning segment.

Belongs to the ATPase B chain family. As to quaternary structure, F-type ATPases have 2 components, F(1) - the catalytic core - and F(0) - the membrane proton channel. F(1) has five subunits: alpha(3), beta(3), gamma(1), delta(1), epsilon(1). F(0) has three main subunits: a(1), b(2) and c(10-14). The alpha and beta chains form an alternating ring which encloses part of the gamma chain. F(1) is attached to F(0) by a central stalk formed by the gamma and epsilon chains, while a peripheral stalk is formed by the delta and b chains.

The protein resides in the cell inner membrane. Its function is as follows. F(1)F(0) ATP synthase produces ATP from ADP in the presence of a proton or sodium gradient. F-type ATPases consist of two structural domains, F(1) containing the extramembraneous catalytic core and F(0) containing the membrane proton channel, linked together by a central stalk and a peripheral stalk. During catalysis, ATP synthesis in the catalytic domain of F(1) is coupled via a rotary mechanism of the central stalk subunits to proton translocation. In terms of biological role, component of the F(0) channel, it forms part of the peripheral stalk, linking F(1) to F(0). The polypeptide is ATP synthase subunit b (Stutzerimonas stutzeri (strain A1501) (Pseudomonas stutzeri)).